Reading from the N-terminus, the 119-residue chain is Large ribosomal subunit protein bL20 (119 aa).

Belongs to the bacterial ribosomal protein bL20 family.

Functionally, binds directly to 23S ribosomal RNA and is necessary for the in vitro assembly process of the 50S ribosomal subunit. It is not involved in the protein synthesizing functions of that subunit. This chain is Large ribosomal subunit protein bL20, found in Burkholderia ambifaria (strain MC40-6).